The following is a 570-amino-acid chain: Interleukin-1 receptor accessory protein (570 aa).

The N-terminal stretch at 1 to 20 is a signal peptide; the sequence is MGLLWYLMSLSFYGILQSHA. Ig-like C2-type domains follow at residues 21–128, 139–230, and 243–348; these read SERC…VAFP, NSAM…RTVT, and PQIY…AKVK. The Extracellular segment spans residues 21–367; that stretch reads SERCDDWGLD…VELACGFGAT (347 aa). 5 disulfide bridges follow: Cys24–Cys122, Cys47–Cys114, Cys137–Cys181, Cys160–Cys212, and Cys266–Cys332. Residue Asn57 is glycosylated (N-linked (GlcNAc...) asparagine). Positions 69–85 are essential for interaction with PTPRD; sequence IWYWTRQDRDLEEPINF. Asn107, Asn111, and Asn118 each carry an N-linked (GlcNAc...) asparagine glycan. 3 N-linked (GlcNAc...) asparagine glycosylation sites follow: Asn196, Asn209, and Asn299. The helical transmembrane segment at 368 to 388 threads the bilayer; that stretch reads VFLVVVLIVVYHVYWLEMVLF. The Cytoplasmic segment spans residues 389–570; sequence YRAHFGTDET…GLSYSSLKNV (182 aa). In terms of domain architecture, TIR spans 403–546; the sequence is KEYDIYVSYA…RFWKQLQVAM (144 aa). Residue Glu482 is part of the active site. Residues 550–570 are disordered; the sequence is KSPRWSSNDKQGLSYSSLKNV. Polar residues predominate over residues 553–570; that stretch reads RWSSNDKQGLSYSSLKNV.

This sequence belongs to the interleukin-1 receptor family. The interleukin-36 receptor complex is a heterodimer of IL1RL2 and IL1RAP; the association is inhibited by IL36RN. The interleukin-1 receptor complex is a heterodimer of IL1R1 and IL1RAP. Associates with IL1R2 to form a non-signaling interleukin-1 receptor complex. Interacts with IL-33-bound IL1RL1 to form the minimal interleukin-33 signaling complex with a 1:1:1 stoichiometry. Interacts with KIT (independently of stimulation with KITLG/SCF). A mast cell-specific KITLG/SCF-induced interleukin-33 signaling complex contains IL1RL1, IL1RAP, KIT and MYD88. Interacts (via the first immunoglobilin domain) with PTPRD (via the third immunoglobilin domain); induces pre- and postsynaptic differentiation of neurons. In terms of tissue distribution, detected in lung, brain, spleen, thymus and liver. Expressed in brain endothelial cells, astrocytes, microglia and neurons. Isoform 3 is predominantly expressed in brain; expressed in hippocampal neurons.

It localises to the cell membrane. The protein resides in the secreted. It carries out the reaction NAD(+) + H2O = ADP-D-ribose + nicotinamide + H(+). Its function is as follows. Coreceptor for IL1RL2 in the IL-36 signaling system. Coreceptor with IL1R1 in the IL-1 signaling system. Associates with IL1R1 bound to IL1B to form the high affinity interleukin-1 receptor complex which mediates interleukin-1-dependent activation of NF-kappa-B and other pathways. Signaling involves the recruitment of adapter molecules such as TOLLIP, MYD88, and IRAK1 or IRAK2 via the respective TIR domains of the receptor/coreceptor subunits. Recruits TOLLIP to the signaling complex. Does not bind to interleukin-1 alone; binding of IL1RN to IL1R1, prevents its association with IL1R1 to form a signaling complex. The cellular response is modulated through a non-signaling association with the membrane IL1R2 decoy receptor. Secreted forms (isoforms 2 and 3) associate with secreted ligand-bound IL1R2 and increase the affinity of secreted IL1R2 for IL1B; this complex formation may be the dominant mechanism for neutralization of IL1B by secreted/soluble receptors. Coreceptor for IL1RL1 in the IL-33 signaling system. Can bidirectionally induce pre- and postsynaptic differentiation of neurons by trans-synaptically binding to PTPRD. May play a role in IL1B-mediated costimulation of IFNG production from T-helper 1 (Th1) cells. Functionally, associates with secreted ligand-bound IL1R2 and increases the affinity of secreted IL1R2 for IL1B; this complex formation may be the dominant mechanism for neutralization of IL1B by secreted/soluble receptors. Enhances the ability of secreted IL1R1 to inhibit IL-33 signaling. In terms of biological role, required for Src phosphorylation by IL1B. Required for IL1B-potentiated NMDA-induced calcium influx in neurons acting in cooperation with IL1R1 isoform 2 to mediate Akt kinase activation. The polypeptide is Interleukin-1 receptor accessory protein (Il1rap) (Mus musculus (Mouse)).